Here is a 314-residue protein sequence, read N- to C-terminus: Ribonuclease Z (314 aa).

Zn(2+)-binding residues include His-61, His-63, Asp-65, His-66, His-137, Asp-207, and His-263. Catalysis depends on Asp-65, which acts as the Proton acceptor.

The protein belongs to the RNase Z family. As to quaternary structure, homodimer. The cofactor is Zn(2+).

It carries out the reaction Endonucleolytic cleavage of RNA, removing extra 3' nucleotides from tRNA precursor, generating 3' termini of tRNAs. A 3'-hydroxy group is left at the tRNA terminus and a 5'-phosphoryl group is left at the trailer molecule.. Functionally, zinc phosphodiesterase, which displays some tRNA 3'-processing endonuclease activity. Probably involved in tRNA maturation, by removing a 3'-trailer from precursor tRNA. The polypeptide is Ribonuclease Z (Thermococcus gammatolerans (strain DSM 15229 / JCM 11827 / EJ3)).